The primary structure comprises 303 residues: N-acetyl-D-glucosamine kinase (303 aa).

Residues 4-11 (GFDIGGTK) and 133-140 (GVGGGLVL) contribute to the ATP site. Zn(2+) is bound by residues His-157, Cys-177, Cys-179, and Cys-184.

Belongs to the ROK (NagC/XylR) family. NagK subfamily.

It catalyses the reaction N-acetyl-D-glucosamine + ATP = N-acetyl-D-glucosamine 6-phosphate + ADP + H(+). It participates in cell wall biogenesis; peptidoglycan recycling. Catalyzes the phosphorylation of N-acetyl-D-glucosamine (GlcNAc) derived from cell-wall degradation, yielding GlcNAc-6-P. The sequence is that of N-acetyl-D-glucosamine kinase from Salmonella paratyphi A (strain ATCC 9150 / SARB42).